We begin with the raw amino-acid sequence, 432 residues long: Putative D-alanyl-D-alanine carboxypeptidase (432 aa).

The chain crosses the membrane as a helical; Signal-anchor span at residues Ala7–Leu25.

This sequence belongs to the peptidase S12 family. YfeW subfamily.

The protein localises to the cell inner membrane. It catalyses the reaction Preferential cleavage: (Ac)2-L-Lys-D-Ala-|-D-Ala. Also transpeptidation of peptidyl-alanyl moieties that are N-acyl substituents of D-alanine.. This Salmonella choleraesuis (strain SC-B67) protein is Putative D-alanyl-D-alanine carboxypeptidase.